A 298-amino-acid chain; its full sequence is Probable tRNA(His) guanylyltransferase (298 aa).

Mg(2+) contacts are provided by Asp-58, Gly-59, and Asp-105. GTP contacts are provided by residues 58–63 (DGRNFH) and 104–105 (SD).

Belongs to the tRNA(His) guanylyltransferase family. Homotetramer. Interacts with MFN1 and MFN2; functions as a guanyl-nucleotide exchange factor/GEF for MFN2 and also probably MFN1. Mg(2+) is required as a cofactor.

The protein localises to the cytoplasm. It localises to the mitochondrion. It catalyses the reaction a 5'-end ribonucleotide-tRNA(His) + GTP + ATP + H2O = a 5'-end phospho-guanosine-ribonucleotide-tRNA(His) + AMP + 2 diphosphate + H(+). In terms of biological role, adds a GMP to the 5'-end of tRNA(His) after transcription and RNase P cleavage. This step is essential for proper recognition of the tRNA and for the fidelity of protein synthesis. Also functions as a guanyl-nucleotide exchange factor/GEF for the MFN1 and MFN2 mitofusins thereby regulating mitochondrial fusion. By regulating both mitochondrial dynamics and bioenergetic function, it contributes to cell survival following oxidative stress. The chain is Probable tRNA(His) guanylyltransferase (THG1L) from Bos taurus (Bovine).